An 868-amino-acid polypeptide reads, in one-letter code: Protein translocase subunit SecA (868 aa).

ATP contacts are provided by residues Gln-85, Gly-103–Thr-107, and Asp-508.

This sequence belongs to the SecA family. As to quaternary structure, monomer and homodimer. Part of the essential Sec protein translocation apparatus which comprises SecA, SecYEG and auxiliary proteins SecDF. Other proteins may also be involved.

It is found in the cell membrane. It localises to the cytoplasm. It catalyses the reaction ATP + H2O + cellular proteinSide 1 = ADP + phosphate + cellular proteinSide 2.. Its function is as follows. Part of the Sec protein translocase complex. Interacts with the SecYEG preprotein conducting channel. Has a central role in coupling the hydrolysis of ATP to the transfer of proteins into and across the cell membrane, serving as an ATP-driven molecular motor driving the stepwise translocation of polypeptide chains across the membrane. This is Protein translocase subunit SecA from Deinococcus radiodurans (strain ATCC 13939 / DSM 20539 / JCM 16871 / CCUG 27074 / LMG 4051 / NBRC 15346 / NCIMB 9279 / VKM B-1422 / R1).